The sequence spans 349 residues: Biotin synthase (349 aa).

The segment covering 1 to 11 (MLEGIEREAAE) has biased composition (basic and acidic residues). The disordered stretch occupies residues 1–30 (MLEGIEREAAEHSNGCSGPAGHAPPAGAPR). One can recognise a Radical SAM core domain in the interval 64 to 283 (HEVQLCTLLS…IAVARVMMPR (220 aa)). The [4Fe-4S] cluster site is built by Cys79, Cys83, and Cys86. 4 residues coordinate [2Fe-2S] cluster: Cys123, Cys155, Cys215, and Arg287.

It belongs to the radical SAM superfamily. Biotin synthase family. As to quaternary structure, homodimer. Requires [4Fe-4S] cluster as cofactor. [2Fe-2S] cluster serves as cofactor.

The enzyme catalyses (4R,5S)-dethiobiotin + (sulfur carrier)-SH + 2 reduced [2Fe-2S]-[ferredoxin] + 2 S-adenosyl-L-methionine = (sulfur carrier)-H + biotin + 2 5'-deoxyadenosine + 2 L-methionine + 2 oxidized [2Fe-2S]-[ferredoxin]. Its pathway is cofactor biosynthesis; biotin biosynthesis; biotin from 7,8-diaminononanoate: step 2/2. Catalyzes the conversion of dethiobiotin (DTB) to biotin by the insertion of a sulfur atom into dethiobiotin via a radical-based mechanism. The protein is Biotin synthase of Sorangium cellulosum (strain So ce56) (Polyangium cellulosum (strain So ce56)).